The chain runs to 666 residues: Protein OS-9 (666 aa).

An N-terminal signal peptide occupies residues 1-30 (MAAEALLSSLLGLLFLGLLLPAHLTGGVGS). Residues 108-230 (APCLLKTKDW…SIRTSRLCPH (123 aa)) enclose the MRH domain. Cys110 and Cys123 form a disulfide bridge. Positions 117, 118, and 130 each coordinate a mannooligosaccharide derivative. Asn177 carries an N-linked (GlcNAc...) asparagine glycan. Disulfide bonds link Cys181/Cys216 and Cys196/Cys228. Positions 182, 188, 212, and 218 each coordinate a mannooligosaccharide derivative. Disordered stretches follow at residues 261–356 (RQAE…NVQV), 370–449 (EELK…SDRE), 505–540 (ESQS…EHRV), and 631–666 (EANK…EFDF). Basic and acidic residues-rich tracts occupy residues 263 to 281 (AESK…DTDH) and 294 to 310 (PKKE…ESEF). Over residues 320–332 (QATGTEEAQAGEQ) the composition is skewed to low complexity. Composition is skewed to basic and acidic residues over residues 370 to 379 (EELKGAEKGK) and 395 to 412 (PQRE…RGLV). The span at 413–429 (EEEDGDEEEEDEDEDEQ) shows a compositional bias: acidic residues. The segment covering 434-449 (EFEKELEGMLLPSDRE) has biased composition (basic and acidic residues). The segment covering 631–646 (EANKERQRQSELESNY) has biased composition (basic and acidic residues). The span at 657 to 666 (DTGDLDEFDF) shows a compositional bias: acidic residues.

This sequence belongs to the OS-9 family. As to quaternary structure, component of the HRD1 complex, which comprises at least SYNV1/HRD1, DERL1/2, FAM8A1, HERPUD1/HERP, OS9, SEL1L and UBE2J1. FAM8A1 is stabilized by interaction with SYNV1, which prevents its proteasomal degradation. OS9 and UBE2J1 recruitment to the complex may be mediated by SEL1L. Through this complex, may interact with ERLEC1 and HSPA5. Interacts (via C-terminus) with CPNE6 (via second C2 domain); this interaction occurs in a calcium-dependent manner in vitro. Interacts with CREB3. Intramolecular disulfide bonds.

Its subcellular location is the endoplasmic reticulum lumen. Functionally, lectin component of the HRD1 complex, which functions in endoplasmic reticulum (ER) quality control and ER-associated degradation (ERAD). Specifically recognizes and binds improperly folded glycoproteins as well as hyperglycosylated proteins, retain them in the ER, and transfers them to the ubiquitination machinery and promote their degradation. Possible targets include TRPV4 as well as hyperglycosylated HSP90B1. This Rattus norvegicus (Rat) protein is Protein OS-9 (Os9).